The sequence spans 366 residues: GTP cyclohydrolase 1 type 2 homolog (366 aa).

5 residues coordinate Zn(2+): H64, H65, D102, H326, and E329.

The protein belongs to the GTP cyclohydrolase I type 2/NIF3 family. Homohexamer.

This chain is GTP cyclohydrolase 1 type 2 homolog, found in Staphylococcus aureus (strain MSSA476).